Reading from the N-terminus, the 169-residue chain is MQFASFISLDWGVVFQIVNTIVMYLILKKLLFKPVTKFMNDRQESIANSIKEAEETKKEAYALKAEYEAKINASKEEGQEIIKEASRKAEMRADEIIKNAQNEANRLMEKAHIEIEREKQKVVNELKDEISNIAILAASKVIEADIDKNKHEKLISDFIKEVGEATWQN.

The chain crosses the membrane as a helical span at residues 5–27; sequence SFISLDWGVVFQIVNTIVMYLIL.

It belongs to the ATPase B chain family. In terms of assembly, F-type ATPases have 2 components, F(1) - the catalytic core - and F(0) - the membrane proton channel. F(1) has five subunits: alpha(3), beta(3), gamma(1), delta(1), epsilon(1). F(0) has three main subunits: a(1), b(2) and c(10-14). The alpha and beta chains form an alternating ring which encloses part of the gamma chain. F(1) is attached to F(0) by a central stalk formed by the gamma and epsilon chains, while a peripheral stalk is formed by the delta and b chains.

It localises to the cell membrane. F(1)F(0) ATP synthase produces ATP from ADP in the presence of a proton or sodium gradient. F-type ATPases consist of two structural domains, F(1) containing the extramembraneous catalytic core and F(0) containing the membrane proton channel, linked together by a central stalk and a peripheral stalk. During catalysis, ATP synthesis in the catalytic domain of F(1) is coupled via a rotary mechanism of the central stalk subunits to proton translocation. Functionally, component of the F(0) channel, it forms part of the peripheral stalk, linking F(1) to F(0). In terms of biological role, in this organism this enzyme may function as an ATP-driven Na(+) ion pump to generate a Na(+) ion electrochemical gradient rather than as an ATP synthase. The sequence is that of ATP synthase subunit b, sodium ion specific (atpF) from Clostridium paradoxum.